The chain runs to 299 residues: Recombination-associated protein RdgC (299 aa).

Belongs to the RdgC family.

It localises to the cytoplasm. It is found in the nucleoid. In terms of biological role, may be involved in recombination. In Neisseria meningitidis serogroup A / serotype 4A (strain DSM 15465 / Z2491), this protein is Recombination-associated protein RdgC.